Reading from the N-terminus, the 937-residue chain is von Willebrand factor (937 aa).

The signal sequence occupies residues 1–22 (MFPTRLARLLLAVALTLPGALC). The propeptide occupies 23–762 (GEGALGKSSM…SSPLSHRSKR (740 aa)). In terms of domain architecture, VWFD 1 spans 33–201 (ARCSLFGADF…ALSSEEQRCP (169 aa)). 2 disulfides stabilise this stretch: Cys-35/Cys-162 and Cys-57/Cys-200. N-linked (GlcNAc...) asparagine glycans are attached at residues Asn-99, Asn-156, and Asn-211. One can recognise a TIL 1 domain in the interval 294–347 (CPTGMEYKECVSPCHRTCRSLSITEVCREQCVDGCSCPEGQLLDEGRCVESTEC). The 175-residue stretch at 385 to 559 (GECLITGQSH…NSWKLRADCE (175 aa)) folds into the VWFD 2 domain. 3 disulfides stabilise this stretch: Cys-387–Cys-523, Cys-409–Cys-558, and Cys-431–Cys-439. The TIL 2 domain maps to 651 to 706 (CPHGQVYQQCGTPCNLTCRSLSHPDEECTEVCLEGCFCPPGLFLDETGSCVPKAQC). Asn-665 carries an N-linked (GlcNAc...) asparagine glycan. Residues 763–786 (SLSCRPPMVKVVCPADNPRAEGLE) form an amino-terminal region. 2 disulfides stabilise this stretch: Cys-766–Cys-807 and Cys-775–Cys-803. Positions 787 to 832 (CTKTCQNYDLECMSTGCVSGCLPAPGMVRHENRCVALERCPCFHQG) are E1. Residues 825–852 (RCPCFHQGREYAPGDRVKVDCNSCVCQD) form a CX region. The N-linked (GlcNAc...) asparagine glycan is linked to Asn-856. The VWFD 3 domain occupies 864–937 (ASCSALGLAH…VEGGEIELFD (74 aa)). An intrachain disulfide couples Cys-913 to Cys-920.

In terms of assembly, multimeric. Interacts with F8. All cysteine residues are involved in intrachain or interchain disulfide bonds. Post-translationally, N- and O-glycosylated. As to expression, plasma.

It localises to the secreted. Its subcellular location is the extracellular space. It is found in the extracellular matrix. Its function is as follows. Important in the maintenance of hemostasis, it promotes adhesion of platelets to the sites of vascular injury by forming a molecular bridge between sub-endothelial collagen matrix and platelet-surface receptor complex GPIb-IX-V. Also acts as a chaperone for coagulation factor VIII, delivering it to the site of injury, stabilizing its heterodimeric structure and protecting it from premature clearance from plasma. This is von Willebrand factor (VWF) from Bos taurus (Bovine).